Here is a 548-residue protein sequence, read N- to C-terminus: CTL-like protein DDB_G0288717 (548 aa).

Residues 1 to 44 (MWAPEEDYKQPLLTNSRVANNGNNNNSNGRGGSSSPSTRLQPEH) are disordered. N25 carries an N-linked (GlcNAc...) asparagine glycan. The chain crosses the membrane as a helical span at residues 52 to 72 (ILFTILFLLVIGGMAAISGIA). Residue N97 is glycosylated (N-linked (GlcNAc...) asparagine). 4 consecutive transmembrane segments (helical) span residues 125–145 (DILIYSVLLAIALGAAWIQLL), 151–171 (FFIYFTLCVGVALVATLGGLF), 184–204 (MIVGGCIIICTLVLVVVIVYL), and 226–246 (PSVFVIASLVVLFFIGFIAYW). An N-linked (GlcNAc...) asparagine glycan is attached at N273. 2 helical membrane-spanning segments follow: residues 290–310 (NLMYFMIFGFFWASSFISAVF) and 350–370 (FGSLAFGSLLIAFIEFMAFML). N377 carries N-linked (GlcNAc...) asparagine glycosylation. 3 helical membrane-spanning segments follow: residues 381–401 (KLVVMVVSCLQCILGCIESIV), 442–462 (FIGGLVLLLGKILGSAASALF), and 479–499 (IALSAIFAFCIFNLFTHIVGI). N544 is a glycosylation site (N-linked (GlcNAc...) asparagine).

It belongs to the CTL (choline transporter-like) family.

The protein localises to the membrane. The chain is CTL-like protein DDB_G0288717 from Dictyostelium discoideum (Social amoeba).